A 262-amino-acid polypeptide reads, in one-letter code: Adenosylcobinamide-GDP ribazoletransferase (262 aa).

The next 8 helical transmembrane spans lie at 4-26 (AWNGWLLALQLFTTIPIRRSIAW), 37-57 (CMPLAGALIGALSAGVYALFS), 59-79 (FSFSSPLVWALLLLWLGIWMA), 112-132 (VGAFAVLSLICLLSFRWLFLY), 139-159 (IPPALFAAVPLLSRAGAAWLL), 183-203 (AIWALGLAFVLLSLLCASTAI), 205-225 (VQTGAALAAAAVVLAAAAKPW), and 237-257 (VLGALIEGGETVLWGVIWLLH).

The protein belongs to the CobS family. Mg(2+) serves as cofactor.

It localises to the cell membrane. The enzyme catalyses alpha-ribazole + adenosylcob(III)inamide-GDP = adenosylcob(III)alamin + GMP + H(+). The catalysed reaction is alpha-ribazole 5'-phosphate + adenosylcob(III)inamide-GDP = adenosylcob(III)alamin 5'-phosphate + GMP + H(+). The protein operates within cofactor biosynthesis; adenosylcobalamin biosynthesis; adenosylcobalamin from cob(II)yrinate a,c-diamide: step 7/7. Its function is as follows. Joins adenosylcobinamide-GDP and alpha-ribazole to generate adenosylcobalamin (Ado-cobalamin). Also synthesizes adenosylcobalamin 5'-phosphate from adenosylcobinamide-GDP and alpha-ribazole 5'-phosphate. This is Adenosylcobinamide-GDP ribazoletransferase from Geobacillus kaustophilus (strain HTA426).